We begin with the raw amino-acid sequence, 418 residues long: Gamma-glutamyl phosphate reductase (418 aa).

The protein belongs to the gamma-glutamyl phosphate reductase family.

It is found in the cytoplasm. The enzyme catalyses L-glutamate 5-semialdehyde + phosphate + NADP(+) = L-glutamyl 5-phosphate + NADPH + H(+). Its pathway is amino-acid biosynthesis; L-proline biosynthesis; L-glutamate 5-semialdehyde from L-glutamate: step 2/2. In terms of biological role, catalyzes the NADPH-dependent reduction of L-glutamate 5-phosphate into L-glutamate 5-semialdehyde and phosphate. The product spontaneously undergoes cyclization to form 1-pyrroline-5-carboxylate. The polypeptide is Gamma-glutamyl phosphate reductase (Clostridium kluyveri (strain NBRC 12016)).